A 29-amino-acid polypeptide reads, in one-letter code: Cyclotide cter-K (29 aa).

Residues 1–29 constitute a cross-link (cyclopeptide (His-Asn)); that stretch reads HEPCGESCVFIPCITTVVGCSCKNKVCYN. 3 disulfide bridges follow: C4-C20, C8-C22, and C13-C27.

Contains 3 disulfide bonds. In terms of processing, this is a cyclic peptide.

Probably participates in a plant defense mechanism. The sequence is that of Cyclotide cter-K from Clitoria ternatea (Butterfly pea).